Reading from the N-terminus, the 838-residue chain is Translation initiation factor IF-2 (838 aa).

Residues 1 to 235 (MSDTDGKKPL…RSLAAMKREQ (235 aa)) are disordered. A compositionally biased stretch (polar residues) spans 18–27 (SGQVKQSFSH). Residues 50–60 (SGSSTTTSSPS) show a composition bias toward low complexity. Residues 88–156 (KLREVDDAKR…AARRAEEAKR (69 aa)) show a composition bias toward basic and acidic residues. Over residues 162 to 177 (PAAAQPDAADSRASAP) the composition is skewed to low complexity. Basic and acidic residues predominate over residues 187–208 (SRKEREREADRDRTTKKDDSRR). The tr-type G domain occupies 335-509 (PRPPIITIMG…ELLDLRANPK (175 aa)). The tract at residues 344–351 (GHVDHGKT) is G1. 344-351 (GHVDHGKT) serves as a coordination point for GTP. A G2 region spans residues 369–373 (GITQH). The tract at residues 391–394 (DTPG) is G3. GTP-binding positions include 391-395 (DTPGH) and 445-448 (NKID). The G4 stretch occupies residues 445–448 (NKID). The interval 481-483 (SAK) is G5.

It belongs to the TRAFAC class translation factor GTPase superfamily. Classic translation factor GTPase family. IF-2 subfamily.

The protein localises to the cytoplasm. Functionally, one of the essential components for the initiation of protein synthesis. Protects formylmethionyl-tRNA from spontaneous hydrolysis and promotes its binding to the 30S ribosomal subunits. Also involved in the hydrolysis of GTP during the formation of the 70S ribosomal complex. The protein is Translation initiation factor IF-2 of Cereibacter sphaeroides (strain ATCC 17025 / ATH 2.4.3) (Rhodobacter sphaeroides).